We begin with the raw amino-acid sequence, 169 residues long: Protein-export protein SecB (169 aa).

The protein belongs to the SecB family. Homotetramer, a dimer of dimers. One homotetramer interacts with 1 SecA dimer.

It localises to the cytoplasm. Functionally, one of the proteins required for the normal export of preproteins out of the cell cytoplasm. It is a molecular chaperone that binds to a subset of precursor proteins, maintaining them in a translocation-competent state. It also specifically binds to its receptor SecA. The sequence is that of Protein-export protein SecB from Haemophilus influenzae (strain 86-028NP).